Here is a 248-residue protein sequence, read N- to C-terminus: Protein STPG4 (248 aa).

In terms of assembly, interacts with histone H3. Interacts with histone H4.

It is found in the cytoplasm. Its subcellular location is the nucleus. In terms of biological role, maternal factor that plays a role in epigenetic chromatin reprogramming during early development of the zygote. Involved in the regulation of gametic DNA demethylation by inducing the conversion of the modified genomic base 5-methylcytosine (5mC) into 5-hydroxymethylcytosine (5hmC). The polypeptide is Protein STPG4 (Homo sapiens (Human)).